A 200-amino-acid chain; its full sequence is ATP-dependent Clp protease proteolytic subunit 1 (200 aa).

The active-site Nucleophile is serine 102. Residue histidine 127 is part of the active site.

This sequence belongs to the peptidase S14 family. As to quaternary structure, fourteen ClpP subunits assemble into 2 heptameric rings which stack back to back to give a disk-like structure with a central cavity, resembling the structure of eukaryotic proteasomes.

It localises to the cytoplasm. It catalyses the reaction Hydrolysis of proteins to small peptides in the presence of ATP and magnesium. alpha-casein is the usual test substrate. In the absence of ATP, only oligopeptides shorter than five residues are hydrolyzed (such as succinyl-Leu-Tyr-|-NHMec, and Leu-Tyr-Leu-|-Tyr-Trp, in which cleavage of the -Tyr-|-Leu- and -Tyr-|-Trp bonds also occurs).. Cleaves peptides in various proteins in a process that requires ATP hydrolysis. Has a chymotrypsin-like activity. Plays a major role in the degradation of misfolded proteins. This chain is ATP-dependent Clp protease proteolytic subunit 1, found in Bradyrhizobium diazoefficiens (strain JCM 10833 / BCRC 13528 / IAM 13628 / NBRC 14792 / USDA 110).